Here is a 208-residue protein sequence, read N- to C-terminus: Sodium/potassium-transporting ATPase subunit beta-1-interacting protein 2 (208 aa).

Helical transmembrane passes span Met1 to Glu23, Ala35 to Ile55, Gly64 to Leu84, and Val148 to Val168.

The protein belongs to the NKAIN family. As to quaternary structure, interacts with ATP1B1. As to expression, detected in the brain only and specifically in neurons; expressed in multiple regions such as cerebral cortex, thalamus, cerebellum, olfactory bulb and brainstem, but not in the hippocampus.

It localises to the cell membrane. The protein is Sodium/potassium-transporting ATPase subunit beta-1-interacting protein 2 (Nkain2) of Mus musculus (Mouse).